The following is a 272-amino-acid chain: Undecaprenyl-diphosphatase (272 aa).

Transmembrane regions (helical) follow at residues 4–24, 43–63, 86–106, 109–129, 145–165, 186–206, 222–242, and 249–269; these read FEVI…FLPI, GGRV…CWLY, ISVL…VDFI, VLFS…IIFW, ITFK…IPGT, TEFS…FDLI, VGFV…VLFV, and VFAW…MFFN.

The protein belongs to the UppP family.

It is found in the cell inner membrane. The enzyme catalyses di-trans,octa-cis-undecaprenyl diphosphate + H2O = di-trans,octa-cis-undecaprenyl phosphate + phosphate + H(+). Its function is as follows. Catalyzes the dephosphorylation of undecaprenyl diphosphate (UPP). Confers resistance to bacitracin. The chain is Undecaprenyl-diphosphatase from Acinetobacter baumannii (strain SDF).